A 1359-amino-acid chain; its full sequence is Junctional cadherin 5-associated protein (1359 aa).

Disordered regions lie at residues 1–147, 249–411, 454–554, 591–813, 840–1076, 1105–1141, 1157–1207, 1225–1260, and 1276–1359; these read MYSV…SLPV, PLNE…PAHP, NSSP…TCET, SHLP…CNSK, KELQ…TIEI, RAGQNQPAEPDASACTPESPQEELLSRPAPADVPRVS, PLFV…KDVE, SVAGSEKRLRSPSKVIESLQEKLASPPRRADPDRLM, and FRNA…VERV. Positions 15–28 are enriched in basic and acidic residues; that stretch reads LSRDPPASREDNPK. 2 stretches are compositionally biased toward polar residues: residues 82 to 91 and 98 to 112; these read PQSTSASRTS and QPPSAWSSHPPTGND. Over residues 120–135 the composition is skewed to basic and acidic residues; sequence RQEARSQKPREHENLE. The segment covering 302–321 has biased composition (low complexity); sequence QQSRGGADSSDSQDSQQMDA. Positions 335–353 are enriched in pro residues; the sequence is LEPPVYVPPPSYRSPPQNI. Over residues 539 to 554 the composition is skewed to polar residues; the sequence is RQVSSPYSQGESTCET. Basic and acidic residues predominate over residues 591–613; the sequence is SHLPDRDMDNNDLKPSADQKNGS. Polar residues-rich tracts occupy residues 619 to 632, 689 to 704, and 756 to 773; these read LQEQSLLSMSSTDL, QQTQTSFSEEPQSSQL, and LSPSSNSAFSRTSLSVDQ. Positions 849 to 859 are enriched in low complexity; sequence SSSSSSSSSSS. The span at 868-880 shows a compositional bias: basic and acidic residues; it reads QENRAHCRQEDVG. The segment covering 1003-1013 has biased composition (polar residues); it reads PKITSAFSSVK. Phosphoserine occurs at positions 1044 and 1050. Ser-1194 is subject to Phosphoserine. Position 1281 is a phosphoserine (Ser-1281). Residues 1324 to 1342 are compositionally biased toward basic and acidic residues; the sequence is SISREEKEHPAAQKEKSMD.

It localises to the cell junction. The protein resides in the adherens junction. This chain is Junctional cadherin 5-associated protein, found in Homo sapiens (Human).